A 386-amino-acid chain; its full sequence is Flap endonuclease 1 (386 aa).

Residues 1–104 form an N-domain region; that stretch reads MGILGLSKLI…GELAKRAERR (104 aa). Residue D34 coordinates Mg(2+). DNA is bound by residues R47 and R70. Residues D86, E158, E160, D179, and D181 each coordinate Mg(2+). Residues 122-253 are I-domain; it reads EIEKFNRRLV…KRAIELINNY (132 aa). DNA is bound at residue E158. DNA contacts are provided by G231 and D233. Mg(2+) is bound at residue D233. Residues 336-344 are interaction with PCNA; that stretch reads TQVRLDSFF. Residues 351–386 form a disordered region; it reads PNAVHAAKRKAEEAKKSANNKKAKTSGGAARGRRPK.

Belongs to the XPG/RAD2 endonuclease family. FEN1 subfamily. Interacts with PCNA. Three molecules of FEN1 bind to one PCNA trimer with each molecule binding to one PCNA monomer. PCNA stimulates the nuclease activity without altering cleavage specificity. Requires Mg(2+) as cofactor. Post-translationally, phosphorylated. Phosphorylation upon DNA damage induces relocalization to the nuclear plasma.

It localises to the nucleus. The protein resides in the nucleolus. Its subcellular location is the nucleoplasm. The protein localises to the mitochondrion. Functionally, structure-specific nuclease with 5'-flap endonuclease and 5'-3' exonuclease activities involved in DNA replication and repair. During DNA replication, cleaves the 5'-overhanging flap structure that is generated by displacement synthesis when DNA polymerase encounters the 5'-end of a downstream Okazaki fragment. It enters the flap from the 5'-end and then tracks to cleave the flap base, leaving a nick for ligation. Also involved in the long patch base excision repair (LP-BER) pathway, by cleaving within the apurinic/apyrimidinic (AP) site-terminated flap. Acts as a genome stabilization factor that prevents flaps from equilibrating into structures that lead to duplications and deletions. Also possesses 5'-3' exonuclease activity on nicked or gapped double-stranded DNA, and exhibits RNase H activity. Also involved in replication and repair of rDNA and in repairing mitochondrial DNA. This chain is Flap endonuclease 1, found in Drosophila persimilis (Fruit fly).